A 324-amino-acid chain; its full sequence is Phthalate 4,5-dioxygenase oxygenase reductase subunit (324 aa).

The FAD-binding FR-type domain maps to aspartate 9–isoleucine 111. Arginine 115–glycine 229 contacts NAD(+). A 2Fe-2S ferredoxin-type domain is found at phenylalanine 241–leucine 324. Positions 275, 280, 283, and 311 each coordinate [2Fe-2S] cluster.

It belongs to the PDR/VanB family. This dioxygenase system consists of two proteins: phthalate oxygenase and phthalate oxygenase reductase. FMN is required as a cofactor.

It catalyses the reaction phthalate + NADH + O2 + H(+) = cis-4,5-dihydroxycyclohexa-2,6-diene-1,2-dicarboxylate + NAD(+). The protein operates within xenobiotic degradation; phthalate degradation; 3,4-dihydroxybenzoate from phthalate: step 1/3. The polypeptide is Phthalate 4,5-dioxygenase oxygenase reductase subunit (pht2) (Pseudomonas putida (Arthrobacter siderocapsulatus)).